A 233-amino-acid polypeptide reads, in one-letter code: EDDIEADHVGFYGISVYQSPGDIGQYTFEFDGDEWFYVDLDKKETVWRLPEFGQLTSFDPQGGLQEIATGKHNLGILTKRSNFTPATNEAPQATVFPKSPVLLGQPNTLICFVDNIFPPVINITWLRNSKSVTDGVYETSFLVNRDHSFHKLSYLTFIPSDDDIYDCKVEHWGLEEPVLKHWEPEIPAPMSELTETVVCALGLSVGLVGIVVGTIFIIQGLRSGGTSRHPGPL.

Residues 1–88 (EDDIEADHVG…KRSNFTPATN (88 aa)) are alpha-1. Residues 1–195 (EDDIEADHVG…IPAPMSELTE (195 aa)) lie on the Extracellular side of the membrane. Positions 89 to 182 (EAPQATVFPK…GLEEPVLKHW (94 aa)) are alpha-2. The region spanning 91-183 (PQATVFPKSP…LEEPVLKHWE (93 aa)) is the Ig-like C1-type domain. Cys111 and Cys167 are joined by a disulfide. A glycan (N-linked (GlcNAc...) asparagine) is linked at Asn122. Residues 183–195 (EPEIPAPMSELTE) form a connecting peptide region. The chain crosses the membrane as a helical span at residues 196–221 (TVVCALGLSVGLVGIVVGTIFIIQGL). The Cytoplasmic portion of the chain corresponds to 222 to 233 (RSGGTSRHPGPL).

Belongs to the MHC class II family.

The protein resides in the membrane. The chain is H-2 class II histocompatibility antigen, A-F alpha chain (H2-Aa) from Mus musculus (Mouse).